The sequence spans 1137 residues: DNA mismatch repair protein Msh3 (1137 aa).

Composition is skewed to low complexity over residues 31–42 and 51–62; these read TGSLKSTSSSTG and AAAAAAAAAAAA. Disordered stretches follow at residues 31 to 122 and 201 to 222; these read TGSL…SEPK and SQFG…KSAN. Residue Ser-33 is modified to Phosphoserine. Over residues 63–76 the composition is skewed to pro residues; that stretch reads PPAPPAPAFPPQLP. Residues 75 to 297 form an interaction with EXO1 region; that stretch reads LPPHIATEID…HRLFVHVRRL (223 aa). Residues 81–97 are compositionally biased toward basic and acidic residues; it reads TEIDRRKKRPLENDGPV. The segment covering 201 to 220 has biased composition (polar residues); it reads SQFGSSNTSHENLQKTASKS. Position 896 to 903 (896 to 903) interacts with ATP; sequence GPNMGGKS. Thr-1099 carries the phosphothreonine modification.

The protein belongs to the DNA mismatch repair MutS family. MSH3 subfamily. As to quaternary structure, component of the DNA mismatch repair (MMR) complex composed at least of MSH2, MSH3, MSH6, PMS1 and MLH1. Heterodimer consisting of MSH2-MSH3 (MutS beta). Forms a ternary complex with MutL alpha (MLH1-PMS1). Interacts with EXO1. Interacts with MCM9.

In terms of biological role, component of the post-replicative DNA mismatch repair system (MMR). Heterodimerizes with MSH2 to form MutS beta which binds to DNA mismatches thereby initiating DNA repair. When bound, the MutS beta heterodimer bends the DNA helix and shields approximately 20 base pairs. MutS beta recognizes large insertion-deletion loops (IDL) up to 13 nucleotides long. After mismatch binding, forms a ternary complex with the MutL alpha heterodimer, which is thought to be responsible for directing the downstream MMR events, including strand discrimination, excision, and resynthesis. The polypeptide is DNA mismatch repair protein Msh3 (MSH3) (Homo sapiens (Human)).